Here is a 266-residue protein sequence, read N- to C-terminus: Family of serine hydrolases 3 (266 aa).

Active-site charge relay system residues include S117, D180, and H209.

The protein belongs to the AB hydrolase 3 family.

Its function is as follows. Serine hydrolase of unknown specificity. This chain is Family of serine hydrolases 3 (FSH3), found in Saccharomyces cerevisiae (strain ATCC 204508 / S288c) (Baker's yeast).